The primary structure comprises 83 residues: Large ribosomal subunit protein bL31B (83 aa).

Belongs to the bacterial ribosomal protein bL31 family. Type B subfamily. Part of the 50S ribosomal subunit.

The protein is Large ribosomal subunit protein bL31B of Levilactobacillus brevis (strain ATCC 367 / BCRC 12310 / CIP 105137 / JCM 1170 / LMG 11437 / NCIMB 947 / NCTC 947) (Lactobacillus brevis).